We begin with the raw amino-acid sequence, 267 residues long: Zinc finger protein ZAT1 (267 aa).

The C2H2-type 1 zinc finger occupies 5 to 27 (HKCKLCWKSFANGRALGGHMRSH). Disordered regions lie at residues 34 to 99 (PSQP…ADIK) and 181 to 204 (SHKK…KKKS). Over residues 52 to 62 (QDRESETESSK) the composition is skewed to basic and acidic residues. Basic residues predominate over residues 63 to 73 (KPSRKRSRLNR). Residues 83–97 (QSNEEGKSETARAAD) are compositionally biased toward basic and acidic residues. C2H2-type zinc fingers lie at residues 160 to 182 (FECE…RASH) and 209 to 231 (HECP…KRSH).

The protein resides in the nucleus. Probable transcription factor that may be involved in stress responses. In Arabidopsis thaliana (Mouse-ear cress), this protein is Zinc finger protein ZAT1 (ZAT1).